Here is a 314-residue protein sequence, read N- to C-terminus: tRNA-cytidine(32) 2-sulfurtransferase (314 aa).

The PP-loop motif motif lies at 53–58 (SGGKDS). Residues C128, C131, and C219 each coordinate [4Fe-4S] cluster.

The protein belongs to the TtcA family. In terms of assembly, homodimer. Mg(2+) is required as a cofactor. The cofactor is [4Fe-4S] cluster.

It localises to the cytoplasm. It carries out the reaction cytidine(32) in tRNA + S-sulfanyl-L-cysteinyl-[cysteine desulfurase] + AH2 + ATP = 2-thiocytidine(32) in tRNA + L-cysteinyl-[cysteine desulfurase] + A + AMP + diphosphate + H(+). It functions in the pathway tRNA modification. Catalyzes the ATP-dependent 2-thiolation of cytidine in position 32 of tRNA, to form 2-thiocytidine (s(2)C32). The sulfur atoms are provided by the cysteine/cysteine desulfurase (IscS) system. This chain is tRNA-cytidine(32) 2-sulfurtransferase, found in Colwellia psychrerythraea (strain 34H / ATCC BAA-681) (Vibrio psychroerythus).